We begin with the raw amino-acid sequence, 593 residues long: UvrABC system protein C (593 aa).

A GIY-YIG domain is found at 14 to 91; sequence DKPGCYLMKN…IKEHDPRYNV (78 aa). A UVR domain is found at 196–231; it reads EEMKQTLTEKMLQAAENMEFERAKEYRDQIKSIEAV.

It belongs to the UvrC family. As to quaternary structure, interacts with UvrB in an incision complex.

It localises to the cytoplasm. Functionally, the UvrABC repair system catalyzes the recognition and processing of DNA lesions. UvrC both incises the 5' and 3' sides of the lesion. The N-terminal half is responsible for the 3' incision and the C-terminal half is responsible for the 5' incision. The chain is UvrABC system protein C from Brevibacillus brevis (strain 47 / JCM 6285 / NBRC 100599).